A 121-amino-acid polypeptide reads, in one-letter code: Protein TCL1B5 (121 aa).

It belongs to the TCL1 family.

This is Protein TCL1B5 (Tcl1b5) from Mus musculus (Mouse).